We begin with the raw amino-acid sequence, 160 residues long: Transcription elongation factor GreA (160 aa).

The stretch at 14 to 38 (IKAELASLKKERPEVIKAIAEAREE) forms a coiled coil.

The protein belongs to the GreA/GreB family.

Its function is as follows. Necessary for efficient RNA polymerase transcription elongation past template-encoded arresting sites. The arresting sites in DNA have the property of trapping a certain fraction of elongating RNA polymerases that pass through, resulting in locked ternary complexes. Cleavage of the nascent transcript by cleavage factors such as GreA or GreB allows the resumption of elongation from the new 3'terminus. GreA releases sequences of 2 to 3 nucleotides. This is Transcription elongation factor GreA from Maridesulfovibrio salexigens (strain ATCC 14822 / DSM 2638 / NCIMB 8403 / VKM B-1763) (Desulfovibrio salexigens).